The chain runs to 334 residues: Beta-glucanase (334 aa).

The N-terminal stretch at 1–27 is a signal peptide; sequence MKNRVISLLMASLLLVLSVIVAPFYKA. A GH16 domain is found at 28–248; the sequence is EAATVVNTPF…YVKYYPNGVP (221 aa). E136 functions as the Nucleophile in the catalytic mechanism. E140 functions as the Proton donor in the catalytic mechanism. Positions 267–334 constitute a Dockerin domain; it reads NLPLKGDVNG…RYLIRAIPSL (68 aa).

Belongs to the glycosyl hydrolase 16 family. As to quaternary structure, may form part of a multienzyme complex (cellulosome).

The catalysed reaction is Hydrolysis of (1-&gt;4)-beta-D-glucosidic linkages in beta-D-glucans containing (1-&gt;3)- and (1-&gt;4)-bonds.. The protein is Beta-glucanase (licB) of Acetivibrio thermocellus (strain ATCC 27405 / DSM 1237 / JCM 9322 / NBRC 103400 / NCIMB 10682 / NRRL B-4536 / VPI 7372) (Clostridium thermocellum).